The chain runs to 276 residues: Diaminopimelate epimerase (276 aa).

Substrate contacts are provided by Asn-13, Gln-46, and Asn-66. The active-site Proton donor is the Cys-75. Residues 76-77 (GN), Asn-159, Asn-192, and 210-211 (ER) each bind substrate. The active-site Proton acceptor is Cys-219. Residue 220–221 (GT) participates in substrate binding.

It belongs to the diaminopimelate epimerase family. Homodimer.

The protein resides in the cytoplasm. It catalyses the reaction (2S,6S)-2,6-diaminopimelate = meso-2,6-diaminopimelate. It functions in the pathway amino-acid biosynthesis; L-lysine biosynthesis via DAP pathway; DL-2,6-diaminopimelate from LL-2,6-diaminopimelate: step 1/1. In terms of biological role, catalyzes the stereoinversion of LL-2,6-diaminopimelate (L,L-DAP) to meso-diaminopimelate (meso-DAP), a precursor of L-lysine and an essential component of the bacterial peptidoglycan. The polypeptide is Diaminopimelate epimerase (Tolumonas auensis (strain DSM 9187 / NBRC 110442 / TA 4)).